A 173-amino-acid polypeptide reads, in one-letter code: Pyrimidine operon regulatory protein (173 aa).

Substrate is bound by residues 40–41 (TR), 97–105 (DDVLYTGRT), and Arg-130. A PRPP-binding motif is present at residues 93 to 105 (VILVDDVLYTGRT).

The protein belongs to the purine/pyrimidine phosphoribosyltransferase family. PyrR subfamily.

Regulates transcriptional attenuation of the pyrimidine nucleotide (pyr) operon in response to exogenous pyrimidines, probably by binding to specific sites on pyr mRNA. This probably disrupts an antiterminator hairpin in the RNA and favors formation of a downstream transcription terminator, leading to a reduced expression of downstream genes. In Lactococcus lactis subsp. lactis (strain IL1403) (Streptococcus lactis), this protein is Pyrimidine operon regulatory protein.